Here is a 403-residue protein sequence, read N- to C-terminus: TBC1 domain family member 20 (403 aa).

Residues 1 to 25 form a disordered region; it reads MALRSAQGDGPTSGHWDGGAEKADF. One can recognise a Rab-GAP TBC domain in the interval 60–246; that stretch reads LLTDEIRRKV…RLYDFFLACH (187 aa). The next 2 membrane-spanning stretches (helical) occupy residues 238–258 and 367–387; these read LYDF…AVIV and FVKL…LAVV.

In terms of assembly, (Microbial infection) Directly interacts with the N-terminal amphipathic helix of hepatitis C virus (HCV) NS5A.

It is found in the membrane. Functionally, GTPase-activating protein (GAP) specific for Rab1 and Rab2 small GTPase families for which it can accelerate the intrinsic GTP hydrolysis rate by more than five orders of magnitude. Also shows GAP activity for RAB18 GTPase. Promotes RAB18 dissociation from the endoplasmic reticulum (ER) membrane into the cytosol, probably through stimulating RAB18 GTP-hydrolysis. Involved in maintaining endoplasmic reticulum structure. The protein is TBC1 domain family member 20 of Homo sapiens (Human).